The primary structure comprises 319 residues: MARRPVLARHRIDFRNRVNYIGRFAPSPSGPLHAGSLVAALASWLDARAHHGLWRLRIEDVDTPRTVPGAAGVIMDQLRALHLHWDGEIMWQSRRGAAYQQAFDALAARGLIYGCGCTRREIADSALRGTAGVDGERPYPGTCREGLPAGRQARAWRVRVPPGVETFVDRWLGPQQQDVAAAVGDFALRRADGLWAYQLAVVVDDADQGVTDVVRGADLLGSTARQRVLGRLLGLAPPRVMHVPLIVDPATGLKLSKQNGAPALDCSQPLRMLQQAWSGLGFAPLAAATPEAFLQAAAAQWAQRFGMRHAAVPASPKAD.

Residues R23 to S27 and E59 each bind L-glutamate. The 'HIGH' region motif lies at P26–S36. Residues C115, C117, Y139, and C143 each coordinate Zn(2+). L-glutamate is bound by residues Y197 and R215. The 'KMSKS' region motif lies at K254–Q258. K257 lines the ATP pocket.

Belongs to the class-I aminoacyl-tRNA synthetase family. GluQ subfamily. It depends on Zn(2+) as a cofactor.

In terms of biological role, catalyzes the tRNA-independent activation of glutamate in presence of ATP and the subsequent transfer of glutamate onto a tRNA(Asp). Glutamate is transferred on the 2-amino-5-(4,5-dihydroxy-2-cyclopenten-1-yl) moiety of the queuosine in the wobble position of the QUC anticodon. The sequence is that of Glutamyl-Q tRNA(Asp) synthetase from Bordetella bronchiseptica (strain ATCC BAA-588 / NCTC 13252 / RB50) (Alcaligenes bronchisepticus).